Reading from the N-terminus, the 951-residue chain is MEHSRGDSVEAGEEEEGRGGWDSRSAGTFSSSCTDCSSYCSSDLEPEWLDRVQKNGELFYLELSEGEEEILLPLSPLEPVGVNHVRFSDNEAEILPEDRKNVRKNSEPRFRKLAKMLKKKNNKKGSAELNRQACPTSILKQNSRQKPGIIVHYQYRDTCLYVNPDHLPEDEHKKTSNLLQALIGIVHQSSRNSKRSERQGRQESNQRLSNQEKLVVHGFIPGSPAIRCGQVLIGDTLVAVNDVEVHVENIERVLSCIPGPMQLKLTFETPVLYSGMGLKNQNNQAQTSINDLASLVWGDEHTNSQQDLQHMPHIVMYLTLRLDSETSKEEQEILYQYPVSDASHKLKSIRGLFLTLGDMLQNVTGAPIVSSSLILNGELVHVSYWKENDKLFLISVPAQRFPLLQLKNVTADLVRTLKFMYSTLDRAFCQAENISRLDHFFSLFFQRVLRVFLLSGITGYGPQFYDACSSLLVENLPGVRWLSLPEDIKIQIDTVLSDLEALDFAELSEDYYEMRRLYMIIGTCIFYKGYLLSNHLPKEDLVDVVLYCRQYCLLALASERIGQLIIWREVYPRYHLKHCGSPATEECSEPGGRYFLLIVGLKHFMLCTLLEAGGCTSKATGNPGPDYIYVDQVKATLLQLEMLDLNLEERLGSAPNPCLSCADWFLPSARDKLGNFTSSIVLNKLQTPKRTTSPVSKRRLFAEAASSLRTRRPSPTRSSGGSDSGTDGAGESVGVITHSSPDMARKFGRRESLGSGGSDGSGGSGTLLKINKKKYSLPNPFSSASLRKNLSERETDDIYNTIKLTSGPENTLFHYLYFETLQGVFISPTHKEVEQLGGSIHPQLIKNFHRCCLSIRSVFQQALNKKNSKHSDSKACVDVAGFDPIKEHGVLFECSPENWNDQKKSPPTMSYWVVGRLFMHPQPQELYVCFHDSVTEISVELAFKLSFGIPL.

3 disordered regions span residues 1–32 (MEHS…FSSS), 189–208 (SSRN…NQRL), and 687–765 (TPKR…GGSG). The region spanning 187 to 269 (HQSSRNSKRS…PMQLKLTFET (83 aa)) is the PDZ domain. Residues 715 to 726 (PTRSSGGSDSGT) are compositionally biased toward low complexity. Residues 743–752 (MARKFGRRES) show a composition bias toward basic and acidic residues. Gly residues predominate over residues 754 to 765 (GSGGSDGSGGSG).

It belongs to the inturned family. In terms of assembly, interacts with fuz and wdpcp; fuz, intu and wdpcp probably form the core CPLANE (ciliogenesis and planar polarity effectors) complex. Expressed in the neural plate during neural tube closure with subsequent strong expression in the ventral neural tube and in facial mesenchyme.

It localises to the cell surface. It is found in the cell membrane. The protein resides in the cytoplasm. Its subcellular location is the cytoskeleton. The protein localises to the cilium basal body. Its function is as follows. Plays a role in the definition of cell polarity via the planar cell polarity (PCP) cascade. Required for ciliogenesis by controlling the organization of the apical actin cytoskeleton and the positioning of the basal bodies at the apical cell surface, which in turn is essential for the normal orientation of elongating ciliary microtubules. Proposed to function as core component of a functional module called CPLANE (ciliogenesis and planar polarity effectors) involved in recruitment of peripheral IFT-A proteins to basal bodies. Controls the localization of both rhoa and disheveled in multi-ciliated cells. Has an indirect effect on hedgehog signaling. This Xenopus laevis (African clawed frog) protein is Protein inturned.